The following is a 157-amino-acid chain: UPF0756 membrane protein BH3161 (157 aa).

4 helical membrane passes run 1–21 (MISQ…LAKN), 54–74 (LGVT…EIGF), 87–107 (WVAL…IDLL), and 117–137 (LVLG…GPLI).

The protein belongs to the UPF0756 family.

The protein localises to the cell membrane. In Halalkalibacterium halodurans (strain ATCC BAA-125 / DSM 18197 / FERM 7344 / JCM 9153 / C-125) (Bacillus halodurans), this protein is UPF0756 membrane protein BH3161.